The chain runs to 397 residues: Xylose isomerase (397 aa).

Active-site residues include H54 and D57. 7 residues coordinate Mg(2+): E181, E217, H220, D245, D255, D257, and D293.

It belongs to the xylose isomerase family. In terms of assembly, homotetramer. Mg(2+) is required as a cofactor.

The protein localises to the cytoplasm. It carries out the reaction alpha-D-xylose = alpha-D-xylulofuranose. The polypeptide is Xylose isomerase (Clavibacter sepedonicus (Clavibacter michiganensis subsp. sepedonicus)).